The following is a 496-amino-acid chain: Glycerol kinase (496 aa).

T12 is a binding site for ADP. ATP-binding residues include T12, T13, and S14. Residue T12 participates in sn-glycerol 3-phosphate binding. R16 is a binding site for ADP. Sn-glycerol 3-phosphate-binding residues include R82, E83, and Y134. R82, E83, and Y134 together coordinate glycerol. The residue at position 230 (H230) is a Phosphohistidine; by HPr. Sn-glycerol 3-phosphate is bound at residue D244. Residues D244 and Q245 each coordinate glycerol. Positions 266 and 309 each coordinate ADP. Residues T266, G309, Q313, and G410 each contribute to the ATP site. ADP-binding residues include G410 and N414.

Belongs to the FGGY kinase family. Homotetramer and homodimer (in equilibrium). In terms of processing, the phosphoenolpyruvate-dependent sugar phosphotransferase system (PTS), including enzyme I, and histidine-containing protein (HPr) are required for the phosphorylation, which leads to the activation of the enzyme.

The catalysed reaction is glycerol + ATP = sn-glycerol 3-phosphate + ADP + H(+). It functions in the pathway polyol metabolism; glycerol degradation via glycerol kinase pathway; sn-glycerol 3-phosphate from glycerol: step 1/1. Activated by phosphorylation and inhibited by fructose 1,6-bisphosphate (FBP). Functionally, key enzyme in the regulation of glycerol uptake and metabolism. Catalyzes the phosphorylation of glycerol to yield sn-glycerol 3-phosphate. This chain is Glycerol kinase, found in Bacillus thuringiensis (strain Al Hakam).